Here is a 476-residue protein sequence, read N- to C-terminus: RuvB-like 1 (476 aa).

A disordered region spans residues Met-1–Val-23. An ATP-binding site is contributed by Gly-89–Thr-96.

This sequence belongs to the RuvB family. In terms of assembly, forms homohexameric rings. May form a dodecamer with ruvb-2 made of two stacked hexameric rings. In terms of tissue distribution, expressed in gonadal cells.

Its subcellular location is the cytoplasm. The protein localises to the nucleus. The catalysed reaction is ATP + H2O = ADP + phosphate + H(+). In terms of biological role, possesses single-stranded DNA-stimulated ATPase and ATP dependent DNA helicase (3' to 5') activity suggesting a role in nuclear processes such as recombination and transcription. May participate in several chromatin remodeling complexes that mediate the ATP-dependent exchange of histones and remodel chromatin by shifting nucleosomes. Involvement in these complexes is likely required for transcriptional activation of selected genes and DNA repair in response to DNA damage. Involved in the Ce-Tor signaling pathway whereby it is required for the accumulation and localization of box C/D snoRNP to nucleoli to regulate ribosomal maturation and thus protein synthesis. Antagonizes the transcriptional activity of transcription factor pha-4, to control postembryonic development and adult longevity. Has a role in pharyngeal development. Has a role in gonadal development. In Caenorhabditis elegans, this protein is RuvB-like 1.